Here is a 346-residue protein sequence, read N- to C-terminus: MSTNKITFLTNWEATPYHLPIFLAQTRGYYEREGIEVAILEPTNPSDVTALIGSGKVDMGLKAMIHTLAAKARGYPVTSFGSLLNEPFTGLITLKGNGINDFKDIKGKRIGYVGEFGKIQLDDLCSKFGLSPSDYTAIRCGMNIAPAIINGEIDGGIGIECMQQVELERWCVSQGRPRSDVQMLRIDRLANLGCCCFCTILYIAHDEFIAKHPDKIKAFLRAIHSATLDMLKDPVQTYKEYIHFKREMGSELHREQFERCFAYFSHDISNVPRDWNKVTNYSKRLGIIPQDFEPNCTNGYLTWELDPDEKDPMGKQEAIAEIQDEIKQKGGVFSGNSLRYVEPANL.

Lys62 carries the post-translational modification N6-(pyridoxal phosphate)lysine. Residue His66 is part of the active site. Position 114-117 (Gly114–Gly117) interacts with pyridoxal 5'-phosphate. The CCCFC; essential for catalytic activity, may be the site of iron coordination motif lies at Cys194 to Cys198.

This sequence belongs to the NMT1/THI5 family. As to quaternary structure, homodimer. The cofactor is Fe cation.

It is found in the cytoplasm. It localises to the nucleus. It carries out the reaction N(6)-(pyridoxal phosphate)-L-lysyl-[4-amino-5-hydroxymethyl-2-methylpyrimidine phosphate synthase] + L-histidyl-[4-amino-5-hydroxymethyl-2-methylpyrimidine phosphate synthase] + 2 Fe(3+) + 4 H2O = L-lysyl-[4-amino-5-hydroxymethyl-2-methylpyrimidine phosphate synthase] + (2S)-2-amino-5-hydroxy-4-oxopentanoyl-[4-amino-5-hydroxymethyl-2-methylpyrimidine phosphate synthase] + 4-amino-2-methyl-5-(phosphooxymethyl)pyrimidine + 3-oxopropanoate + 2 Fe(2+) + 2 H(+). The protein operates within cofactor biosynthesis; thiamine diphosphate biosynthesis. Its function is as follows. Responsible for the formation of the pyrimidine heterocycle in the thiamine biosynthesis pathway. Catalyzes the formation of hydroxymethylpyrimidine phosphate (HMP-P) from histidine and pyridoxal phosphate (PLP). The protein uses PLP and the active site histidine to form HMP-P, generating an inactive enzyme. The enzyme can only undergo a single turnover, which suggests it is a suicide enzyme. In Schizosaccharomyces pombe (strain 972 / ATCC 24843) (Fission yeast), this protein is 4-amino-5-hydroxymethyl-2-methylpyrimidine phosphate synthase.